The chain runs to 449 residues: MFNINPYKSKTTKSSSSSSASPKSSKISNVSGSGSSSSSSSSSSSSSKDKDKDKRKKSFLKDDSVPSLSSKTENSLSLTSLSEITQSMTNTQTQTATDASMTAEDVSEIGEDYDPFLSILEEPGVDGATIEKETTEELQEMLAVLKGVQNECNVLLLGRTGVGKSSTLNTVFGIDIPVHSSESCTQDPFTYSRVVNGFKLNIIDTPGFLDSQGELVDSNNMIKIQRYLSGKTIHCVLFVEKFTETRFDGAHQLVINQFTEKLGPQLWRNAAVVLTYANSVLPDSCYDGFDEEDDVGPWKKHYEARALQFRKFFAGILAQLPQDDYPPKHIPVYAMENSRRCKRNEQGQRVLIDGTPCLHLLISGLLKMVDPKTAFLFMGHLRAKNKPGRGHRGDQNDRELSIMDNITEILKLFIVPPFDQLGKGTVAKILENWGKKLDKYGNLPNLLKI.

A disordered region spans residues 1–77 (MFNINPYKSK…LSSKTENSLS (77 aa)). 2 stretches are compositionally biased toward low complexity: residues 8–46 (KSKT…SSSS) and 67–77 (SLSSKTENSLS). Residues 149 to 386 (QNECNVLLLG…FMGHLRAKNK (238 aa)) enclose the AIG1-type G domain. The G1 stretch occupies residues 158–165 (GRTGVGKS). 158–165 (GRTGVGKS) lines the GTP pocket. The interval 183 to 187 (SCTQD) is G2. The interval 204-207 (DTPG) is G3. The segment at 275-278 (TYAN) is G4. Residues 336–338 (ENS) are G5.

The protein belongs to the TRAFAC class TrmE-Era-EngA-EngB-Septin-like GTPase superfamily. AIG1/Toc34/Toc159-like paraseptin GTPase family. IAN subfamily.

This chain is GTP-binding protein A (gtpA), found in Dictyostelium discoideum (Social amoeba).